The primary structure comprises 158 residues: Snaclec alboaggregin-D subunit alpha (158 aa).

The signal sequence occupies residues 1–23 (MGRFIFGSFGLLVVFLSLSGTGA). 3 disulfides stabilise this stretch: Cys-27–Cys-38, Cys-55–Cys-152, and Cys-127–Cys-144. Positions 34–153 (YDRYCYQAFS…CAELNPFICK (120 aa)) constitute a C-type lectin domain.

The protein belongs to the snaclec family. As to quaternary structure, tetramer of heterodimers of alpha and beta subunits (alphabeta)(4); disulfide-linked. Expressed by the venom gland.

The protein resides in the secreted. Functionally, snaclec that induces human platelet aggregation in the absence of any cofactor with the EC(50) of 0.25 nM and causes tyrosine phosphorylation in human platelets. Antibodies against either platelet GPIbalpha (GP1BA) or GPVI (GP6) inhibit alboaggregin D-induced platelet aggregation. Only the combination of these two antibodies completely inhibit aggregation, suggesting that it acts through both GPIbalpha (GP1BA) and GPVI (GP6). The protein is Snaclec alboaggregin-D subunit alpha of Trimeresurus albolabris (White-lipped pit viper).